A 121-amino-acid chain; its full sequence is HTH-type transcriptional regulator Rv1152 (121 aa).

Residues 15 to 83 form the HTH gntR-type domain; it reads KPLFDQLRTQ…GRFGTFISRF (69 aa). Residues 43-62 constitute a DNA-binding region (H-T-H motif); sequence VRDLAGQLGVAANTVARAYR.

The protein resides in the cytoplasm. The protein localises to the secreted. Its subcellular location is the cell wall. Its function is as follows. Transcriptional regulator that modulates resistance to vancomycin and aminoglycosides. Negatively regulates the expression of several genes responsive to vancomycin, resulting in decreased susceptibility of bacteria to vancomycin. Negatively regulates the expression of genes encoding the ribosome binding protein Hsp, the small subunit of sulfate adenylyltransferase CysD, the L-lysine-epsilon aminotransferase LAT and the protease HtpX. Also modulates purine metabolism and aminoglycoside antibiotic resistance. Negatively regulates the expression of purine metabolism-related genes and the accumulation of purine metabolites, which affects aminoglycoside antibiotic resistance. The polypeptide is HTH-type transcriptional regulator Rv1152 (Mycobacterium tuberculosis (strain ATCC 25618 / H37Rv)).